Consider the following 194-residue polypeptide: Ras-like protein rasS (194 aa).

10-17 (GPGGVGKS) contributes to the GTP binding site. An Effector region motif is present at residues 32–40 (YDPTLEDSY). Residues 57 to 61 (DTAGQ) and 116 to 119 (NKCD) each bind GTP. A disordered region spans residues 168–194 (RQSNQHSNSQEQNTDQPIKKKKSCNLL). The segment covering 169 to 180 (QSNQHSNSQEQN) has biased composition (low complexity). At C191 the chain carries Cysteine methyl ester. C191 carries the S-geranylgeranyl cysteine lipid modification. The propeptide at 192-194 (NLL) is removed in mature form.

It belongs to the small GTPase superfamily. Ras family.

It localises to the cell membrane. The catalysed reaction is GTP + H2O = GDP + phosphate + H(+). Its function is as follows. Ras proteins bind GDP/GTP and possess intrinsic GTPase activity. The polypeptide is Ras-like protein rasS (rasS) (Dictyostelium discoideum (Social amoeba)).